Reading from the N-terminus, the 198-residue chain is Pyridoxal 5'-phosphate synthase subunit PdxT (198 aa).

52-54 (GES) provides a ligand contact to L-glutamine. The active-site Nucleophile is the Cys84. L-glutamine is bound by residues Arg115 and 142-143 (IR). Residues His178 and Glu180 each act as charge relay system in the active site.

The protein belongs to the glutaminase PdxT/SNO family. As to quaternary structure, in the presence of PdxS, forms a dodecamer of heterodimers. Only shows activity in the heterodimer.

The catalysed reaction is aldehydo-D-ribose 5-phosphate + D-glyceraldehyde 3-phosphate + L-glutamine = pyridoxal 5'-phosphate + L-glutamate + phosphate + 3 H2O + H(+). It carries out the reaction L-glutamine + H2O = L-glutamate + NH4(+). It participates in cofactor biosynthesis; pyridoxal 5'-phosphate biosynthesis. Functionally, catalyzes the hydrolysis of glutamine to glutamate and ammonia as part of the biosynthesis of pyridoxal 5'-phosphate. The resulting ammonia molecule is channeled to the active site of PdxS. This Archaeoglobus fulgidus (strain ATCC 49558 / DSM 4304 / JCM 9628 / NBRC 100126 / VC-16) protein is Pyridoxal 5'-phosphate synthase subunit PdxT.